The chain runs to 1220 residues: ATP-dependent helicase/nuclease subunit A (1220 aa).

In terms of domain architecture, UvrD-like helicase ATP-binding spans 9–473 (VIWTDDQWKS…IDLSQNFRSR (465 aa)). 30-37 (AAAGSGKT) lines the ATP pocket. The 309-residue stretch at 474–782 (PEVLSTTNYL…RMMTIHASKG (309 aa)) folds into the UvrD-like helicase C-terminal domain.

It belongs to the helicase family. AddA subfamily. In terms of assembly, heterodimer of AddA and AddB/RexB. Requires Mg(2+) as cofactor.

The catalysed reaction is Couples ATP hydrolysis with the unwinding of duplex DNA by translocating in the 3'-5' direction.. It carries out the reaction ATP + H2O = ADP + phosphate + H(+). In terms of biological role, the heterodimer acts as both an ATP-dependent DNA helicase and an ATP-dependent, dual-direction single-stranded exonuclease. Recognizes the chi site generating a DNA molecule suitable for the initiation of homologous recombination. The AddA nuclease domain is required for chi fragment generation; this subunit has the helicase and 3' -&gt; 5' nuclease activities. This is ATP-dependent helicase/nuclease subunit A from Staphylococcus carnosus (strain TM300).